Consider the following 158-residue polypeptide: MPKETGRKLIAQNKRARHDYDILDTYEAGLVLMGTEVKALRAGRASLVDGFAQIADGEIWLHNVHIPEYTEGTWTNHAPRRRRKLLLHRAEIEKLIGKTREGGLTVVPLSLYFKDGRAKVEIALARGRKNYDKRHALAERDAAREMSRIMGRQAKGRV.

The protein belongs to the SmpB family.

The protein localises to the cytoplasm. Its function is as follows. Required for rescue of stalled ribosomes mediated by trans-translation. Binds to transfer-messenger RNA (tmRNA), required for stable association of tmRNA with ribosomes. tmRNA and SmpB together mimic tRNA shape, replacing the anticodon stem-loop with SmpB. tmRNA is encoded by the ssrA gene; the 2 termini fold to resemble tRNA(Ala) and it encodes a 'tag peptide', a short internal open reading frame. During trans-translation Ala-aminoacylated tmRNA acts like a tRNA, entering the A-site of stalled ribosomes, displacing the stalled mRNA. The ribosome then switches to translate the ORF on the tmRNA; the nascent peptide is terminated with the 'tag peptide' encoded by the tmRNA and targeted for degradation. The ribosome is freed to recommence translation, which seems to be the essential function of trans-translation. The polypeptide is SsrA-binding protein (Parafrankia sp. (strain EAN1pec)).